The following is a 210-amino-acid chain: Large ribosomal subunit protein uL22 (210 aa).

The tract at residues 123-210 (NEMTSKETVK…TKSTKKEGSK (88 aa)) is disordered. Positions 126–157 (TSKETVKEPAKKPSAKVEKPAEAKAPKQETST) are enriched in basic and acidic residues. Low complexity predominate over residues 158-185 (KKPTTTTESKPKTSKAPAQKQAAKVAKP).

The protein belongs to the universal ribosomal protein uL22 family. Part of the 50S ribosomal subunit.

In terms of biological role, this protein binds specifically to 23S rRNA; its binding is stimulated by other ribosomal proteins, e.g. L4, L17, and L20. It is important during the early stages of 50S assembly. It makes multiple contacts with different domains of the 23S rRNA in the assembled 50S subunit and ribosome. Its function is as follows. The globular domain of the protein is located near the polypeptide exit tunnel on the outside of the subunit, while an extended beta-hairpin is found that lines the wall of the exit tunnel in the center of the 70S ribosome. The sequence is that of Large ribosomal subunit protein uL22 from Metamycoplasma arthritidis (strain 158L3-1) (Mycoplasma arthritidis).